A 434-amino-acid chain; its full sequence is Nicotinate phosphoribosyltransferase (434 aa).

His-242 bears the Phosphohistidine; by autocatalysis mark.

This sequence belongs to the NAPRTase family. Post-translationally, transiently phosphorylated on a His residue during the reaction cycle. Phosphorylation strongly increases the affinity for substrates and increases the rate of nicotinate D-ribonucleotide production. Dephosphorylation regenerates the low-affinity form of the enzyme, leading to product release.

The enzyme catalyses nicotinate + 5-phospho-alpha-D-ribose 1-diphosphate + ATP + H2O = nicotinate beta-D-ribonucleotide + ADP + phosphate + diphosphate. It participates in cofactor biosynthesis; NAD(+) biosynthesis; nicotinate D-ribonucleotide from nicotinate: step 1/1. Its function is as follows. Catalyzes the synthesis of beta-nicotinate D-ribonucleotide from nicotinate and 5-phospho-D-ribose 1-phosphate at the expense of ATP. The protein is Nicotinate phosphoribosyltransferase of Brucella melitensis biotype 1 (strain ATCC 23456 / CCUG 17765 / NCTC 10094 / 16M).